The following is a 308-amino-acid chain: tRNA pseudouridine synthase B (308 aa).

Aspartate 47 functions as the Nucleophile in the catalytic mechanism.

This sequence belongs to the pseudouridine synthase TruB family. Type 1 subfamily.

The enzyme catalyses uridine(55) in tRNA = pseudouridine(55) in tRNA. Functionally, responsible for synthesis of pseudouridine from uracil-55 in the psi GC loop of transfer RNAs. The chain is tRNA pseudouridine synthase B from Xanthomonas oryzae pv. oryzae (strain MAFF 311018).